A 153-amino-acid chain; its full sequence is Insulin-like growth factor 1 (153 aa).

Residues 49 to 77 are b; sequence GPETLCGAELVDALQFVCGDRGFYFSKPT. 3 disulfides stabilise this stretch: Cys54-Cys96, Cys66-Cys109, and Cys95-Cys100. The tract at residues 78–89 is c; it reads GYGSSSRRLHHK. An a region spans residues 90-110; that stretch reads GIVDECCFQSCDLRRLEMYCA. The tract at residues 111-118 is d; it reads PIKPPKSA. A propeptide spans 119–153 (e peptide); sequence RSVRAQRHTDMPKAQKEVHLKNTSRGNTGNRNYRM. The disordered stretch occupies residues 119–153; that stretch reads RSVRAQRHTDMPKAQKEVHLKNTSRGNTGNRNYRM. The segment covering 125-138 has biased composition (basic and acidic residues); that stretch reads RHTDMPKAQKEVHL. The segment covering 139–153 has biased composition (polar residues); the sequence is KNTSRGNTGNRNYRM.

Belongs to the insulin family. In terms of assembly, forms a ternary complex with IGFR1 and ITGAV:ITGB3. Forms a ternary complex with IGFR1 and ITGA6:ITGB4. Forms a ternary complex with IGFBP3 and ALS.

The protein resides in the secreted. The insulin-like growth factors, isolated from plasma, are structurally and functionally related to insulin but have a much higher growth-promoting activity. Acts as a ligand for IGF1R. Binds to the alpha subunit of IGF1R, leading to the activation of the intrinsic tyrosine kinase activity which autophosphorylates tyrosine residues in the beta subunit thus initiatiating a cascade of down-stream signaling events leading to activation of the PI3K-AKT/PKB and the Ras-MAPK pathways. Binds to integrins. Its binding to integrins and subsequent ternary complex formation with integrins and IGFR1 are essential for IGF1 signaling. The protein is Insulin-like growth factor 1 of Gallus gallus (Chicken).